Consider the following 279-residue polypeptide: Pantothenate synthetase (279 aa).

26 to 33 provides a ligand contact to ATP; sequence MGNLHEGH. His-33 acts as the Proton donor in catalysis. Position 57 (Gln-57) interacts with (R)-pantoate. Position 57 (Gln-57) interacts with beta-alanine. Position 144–147 (144–147) interacts with ATP; it reads GKKD. Gln-150 is a binding site for (R)-pantoate. ATP contacts are provided by residues Val-173 and 181–184; that span reads LSSR.

Belongs to the pantothenate synthetase family. In terms of assembly, homodimer.

The protein resides in the cytoplasm. It catalyses the reaction (R)-pantoate + beta-alanine + ATP = (R)-pantothenate + AMP + diphosphate + H(+). The protein operates within cofactor biosynthesis; (R)-pantothenate biosynthesis; (R)-pantothenate from (R)-pantoate and beta-alanine: step 1/1. Functionally, catalyzes the condensation of pantoate with beta-alanine in an ATP-dependent reaction via a pantoyl-adenylate intermediate. The sequence is that of Pantothenate synthetase from Burkholderia cenocepacia (strain ATCC BAA-245 / DSM 16553 / LMG 16656 / NCTC 13227 / J2315 / CF5610) (Burkholderia cepacia (strain J2315)).